Here is a 146-residue protein sequence, read N- to C-terminus: D-aminoacyl-tRNA deacylase (146 aa).

The Gly-cisPro motif, important for rejection of L-amino acids signature appears at 137 to 138 (GP).

It belongs to the DTD family. Homodimer.

It localises to the cytoplasm. It catalyses the reaction glycyl-tRNA(Ala) + H2O = tRNA(Ala) + glycine + H(+). The enzyme catalyses a D-aminoacyl-tRNA + H2O = a tRNA + a D-alpha-amino acid + H(+). An aminoacyl-tRNA editing enzyme that deacylates mischarged D-aminoacyl-tRNAs. Also deacylates mischarged glycyl-tRNA(Ala), protecting cells against glycine mischarging by AlaRS. Acts via tRNA-based rather than protein-based catalysis; rejects L-amino acids rather than detecting D-amino acids in the active site. By recycling D-aminoacyl-tRNA to D-amino acids and free tRNA molecules, this enzyme counteracts the toxicity associated with the formation of D-aminoacyl-tRNA entities in vivo and helps enforce protein L-homochirality. This is D-aminoacyl-tRNA deacylase from Anoxybacillus flavithermus (strain DSM 21510 / WK1).